Consider the following 510-residue polypeptide: Cytochrome P450 705A20 (510 aa).

Residues Q7 to F27 traverse the membrane as a helical segment.

Belongs to the cytochrome P450 family. Requires heme as cofactor.

It is found in the membrane. This is Cytochrome P450 705A20 (CYP705A20) from Arabidopsis thaliana (Mouse-ear cress).